The chain runs to 1199 residues: MLMSADSSDSAKTSVICSTVSASMLAPPAPEQPSTTAPPILGVTGRSHLENALKLPPNTSVSAYYQHNSKLGMGQNYNPEFRSLVAPVTDLDTVPPTGVTMASSSNSPNSSVKLPHSGVIFVSKSSAVSTTDGPTAVLQQQQPQQQMPQHFESLPHHHPQQEHQPQQQQQQHHLQHHPHPHVMYPHGYQQANLHHSGGIAVVPADSRPQTPEYIKSYPVMDTTVASSVKGEPELNIEFDGTTVLCRVCGDKASGFHYGVHSCEGCKGFFRRSIQQKIQYRPCTKNQQCSILRINRNRCQYCRLKKCIAVGMSRDAVRFGRVPKREKARILAAMQQSTQNRGQQRALATELDDQPRLLAAVLRAHLETCEFTKEKVSAMRQRARDCPSYSMPTLLACPLNPAPELQSEQEFSQRFAHVIRGVIDFAGMIPGFQLLTQDDKFTLLKAGLFDALFVRLICMFDSSINSIICLNGQVMRRDAIQNGANARFLVDSTFNFAERMNSMNLTDAEIGLFCAIVLITPDRPGLRNLELIEKMYSRLKGCLQYIVAQNRPDQPEFLAKLLETMPDLRTLSTLHTEKLVVFRTEHKELLRQQMWSMEDGNNSDGQQNKSPSGSWADAMDVEAAKSPLGSVSSTESADLDYGSPSSSQPQGVSLPSPPQQQPSALASSAPLLAATLSGGCPLRNRANSGSSGDSGAAEMDIVGSHAHLTQNGLTITPIVRHQQQQQQQQQIGILNNAHSRNLNGGHAMCQQQQQHPQLHHHLTAGAARYRKLDSPTDSGIESGNEKNECKAVSSGGSSSCSSPRSSVDDALDCSDAAANHNQVVQHPQLSVVSVSPVRSPQPSTSSHLKRQIVEDMPVLKRVLQAPPLYDTNSLMDEAYKPHKKFRALRHREFETAEADASSSTSGSNSLSAGSPRQSPVPNSVATPPPSAASAAAGNPAQSQLHMHLTRSSPKASMASSHSVLAKSLMAEPRMTPEQMKRSDIIQNYLKRENSTAASSTTNGVGNRSPSSSSTPPPSAVQNQQRWGSSSVITTTCQQRQQSVSPHSNGSSSSSSSSSSSSSSSSSTSSNCSSSSASSCQYFQSPHSTSNGTSAPASSSSGSNSATPLLELQVDIADSAQPLNLSKKSPTPPPSKLHALVAAANAVQRYPTLSADVTVTASNGGPPSAAASPAPSSSPPASVGSPNPGLSAAVHKVMLEA.

Positions 130–182 (TTDGPTAVLQQQQPQQQMPQHFESLPHHHPQQEHQPQQQQQQHHLQHHPHPHV) are disordered. Composition is skewed to low complexity over residues 139-149 (QQQQPQQQMPQ) and 162-172 (EHQPQQQQQQH). Residues 242-318 (TVLCRVCGDK…VGMSRDAVRF (77 aa)) constitute a DNA-binding region (nuclear receptor). 2 NR C4-type zinc fingers span residues 245–265 (CRVC…CEGC) and 282–306 (CTKN…LKKC). The NR LBD domain occupies 352 to 600 (DQPRLLAAVL…QQMWSMEDGN (249 aa)). 6 disordered regions span residues 624–665 (KSPL…SALA), 771–808 (LDSP…SVDD), 831–851 (VSVS…KRQI), 895–961 (AEAD…SSHS), 991–1104 (ENST…SNSA), and 1155–1188 (VTVT…NPGL). Low complexity-rich tracts occupy residues 641–653 (GSPS…GVSL), 792–804 (SSGG…SPRS), 831–845 (VSVS…STSS), 897–942 (ADAS…AQSQ), and 950–961 (SSPKASMASSHS). Polar residues-rich tracts occupy residues 993–1006 (STAA…VGNR) and 1018–1040 (AVQN…QRQQ). Composition is skewed to low complexity over residues 1041-1077 (SVSP…SASS), 1086-1104 (STSN…SNSA), and 1159-1187 (ASNG…PNPG).

This sequence belongs to the nuclear hormone receptor family. NR1 subfamily.

It is found in the nucleus. In terms of biological role, implicated in the regulation of ecdysone-triggered gene hierarchies. Probably plays a key role in mediating the regulation of the larval molt by 20-OH-ecdysone. The polypeptide is Ecdysone-induced protein 75B, isoforms C/D (Eip75B) (Drosophila melanogaster (Fruit fly)).